The chain runs to 158 residues: Transcription elongation factor GreA (158 aa).

The protein belongs to the GreA/GreB family.

Its function is as follows. Necessary for efficient RNA polymerase transcription elongation past template-encoded arresting sites. The arresting sites in DNA have the property of trapping a certain fraction of elongating RNA polymerases that pass through, resulting in locked ternary complexes. Cleavage of the nascent transcript by cleavage factors such as GreA or GreB allows the resumption of elongation from the new 3'terminus. GreA releases sequences of 2 to 3 nucleotides. This is Transcription elongation factor GreA from Hamiltonella defensa subsp. Acyrthosiphon pisum (strain 5AT).